We begin with the raw amino-acid sequence, 288 residues long: tRNA pseudouridine synthase A (288 aa).

The active-site Nucleophile is the Asp59. Residue Tyr134 coordinates substrate.

This sequence belongs to the tRNA pseudouridine synthase TruA family. Homodimer.

The enzyme catalyses uridine(38/39/40) in tRNA = pseudouridine(38/39/40) in tRNA. Formation of pseudouridine at positions 38, 39 and 40 in the anticodon stem and loop of transfer RNAs. The chain is tRNA pseudouridine synthase A from Leifsonia xyli subsp. xyli (strain CTCB07).